A 431-amino-acid chain; its full sequence is Serine hydroxymethyltransferase (431 aa).

Residues L126 and 130–132 (GHL) contribute to the (6S)-5,6,7,8-tetrahydrofolate site. N6-(pyridoxal phosphate)lysine is present on K235.

It belongs to the SHMT family. As to quaternary structure, homodimer. It depends on pyridoxal 5'-phosphate as a cofactor.

The protein localises to the cytoplasm. The enzyme catalyses (6R)-5,10-methylene-5,6,7,8-tetrahydrofolate + glycine + H2O = (6S)-5,6,7,8-tetrahydrofolate + L-serine. It participates in one-carbon metabolism; tetrahydrofolate interconversion. It functions in the pathway amino-acid biosynthesis; glycine biosynthesis; glycine from L-serine: step 1/1. Catalyzes the reversible interconversion of serine and glycine with tetrahydrofolate (THF) serving as the one-carbon carrier. This reaction serves as the major source of one-carbon groups required for the biosynthesis of purines, thymidylate, methionine, and other important biomolecules. Also exhibits THF-independent aldolase activity toward beta-hydroxyamino acids, producing glycine and aldehydes, via a retro-aldol mechanism. This is Serine hydroxymethyltransferase from Nocardia farcinica (strain IFM 10152).